The sequence spans 234 residues: MGAETMESPSLFLCKGLLLTASLLICWNWSTAALLTSKEMRFSAAEGAKVLLSVPDQEENLLSFSWYKGKDVNENFTIAHYKKSSDSLQLGKKVSGREEIYKDGSMMLRAITLEDTGFYTLQTFKAHGQQEVTHVHLQVYKIVTKPYLQLNHTRLKRKSASILTCVSPDTGVDINWFFNYKPLNATERITLSPEKRELTISPVWRADVGIYLCEVSNSFSSKKSYPLLMALAYG.

An N-terminal signal peptide occupies residues 1 to 32 (MGAETMESPSLFLCKGLLLTASLLICWNWSTA). Residues Asn-28, Asn-75, Asn-151, and Asn-184 are each glycosylated (N-linked (GlcNAc...) asparagine). Residues 146 to 226 (PYLQLNHTRL…NSFSSKKSYP (81 aa)) form the Ig-like C2-type domain. An intrachain disulfide couples Cys-165 to Cys-213.

This sequence belongs to the immunoglobulin superfamily. CEA family. Detected in placenta.

The polypeptide is Cell adhesion molecule CEACAM15 (Mus musculus (Mouse)).